We begin with the raw amino-acid sequence, 445 residues long: Phosphoglucosamine mutase (445 aa).

Catalysis depends on Ser102, which acts as the Phosphoserine intermediate. Ser102, Asp241, Asp243, and Asp245 together coordinate Mg(2+). Ser102 is subject to Phosphoserine.

Belongs to the phosphohexose mutase family. Mg(2+) is required as a cofactor. Activated by phosphorylation.

It catalyses the reaction alpha-D-glucosamine 1-phosphate = D-glucosamine 6-phosphate. Its function is as follows. Catalyzes the conversion of glucosamine-6-phosphate to glucosamine-1-phosphate. The sequence is that of Phosphoglucosamine mutase from Rhodococcus erythropolis (strain PR4 / NBRC 100887).